Here is a 161-residue protein sequence, read N- to C-terminus: MSQLTHINAAGEAHMVDVSGKAETVREARAEAFVEMRPETLSMIVSGSHHKGDVFATARIAGIQAAKRTWELIPLCHPLLLSKVEVQLFADEARSRVRIESLCRLTGKTGVEMEALTAASVAALTIYDMCKAVQKDMVIGPVRLLAKSGGKSGDFQVDAHD.

Residues 75 to 77 and 113 to 114 contribute to the substrate site; these read LCH and ME. D128 is a catalytic residue.

This sequence belongs to the MoaC family. As to quaternary structure, homohexamer; trimer of dimers.

The enzyme catalyses (8S)-3',8-cyclo-7,8-dihydroguanosine 5'-triphosphate = cyclic pyranopterin phosphate + diphosphate. Its pathway is cofactor biosynthesis; molybdopterin biosynthesis. In terms of biological role, catalyzes the conversion of (8S)-3',8-cyclo-7,8-dihydroguanosine 5'-triphosphate to cyclic pyranopterin monophosphate (cPMP). The polypeptide is Cyclic pyranopterin monophosphate synthase (Cronobacter sakazakii (strain ATCC BAA-894) (Enterobacter sakazakii)).